The chain runs to 253 residues: Vitamin B12 import ATP-binding protein BtuD (253 aa).

The ABC transporter domain occupies 4–236; it reads LQLNNVSVGT…DVLSQVFEVD (233 aa). Position 32–39 (32–39) interacts with ATP; the sequence is GPNGAGKS.

This sequence belongs to the ABC transporter superfamily. Vitamin B12 importer (TC 3.A.1.13.1) family. In terms of assembly, the complex is composed of two ATP-binding proteins (BtuD), two transmembrane proteins (BtuC) and a solute-binding protein (BtuF).

Its subcellular location is the cell inner membrane. It carries out the reaction an R-cob(III)alamin(out) + ATP + H2O = an R-cob(III)alamin(in) + ADP + phosphate + H(+). Part of the ABC transporter complex BtuCDF involved in vitamin B12 import. Responsible for energy coupling to the transport system. The chain is Vitamin B12 import ATP-binding protein BtuD from Yersinia pestis.